A 315-amino-acid chain; its full sequence is tRNA-dihydrouridine(16) synthase (315 aa).

Residues 7-9 (PME) and Gln-68 contribute to the FMN site. Cys-98 serves as the catalytic Proton donor. Residues Lys-139, 199-201 (NGE), and 223-224 (GR) each bind FMN.

It belongs to the Dus family. DusC subfamily. It depends on FMN as a cofactor.

It carries out the reaction 5,6-dihydrouridine(16) in tRNA + NADP(+) = uridine(16) in tRNA + NADPH + H(+). The catalysed reaction is 5,6-dihydrouridine(16) in tRNA + NAD(+) = uridine(16) in tRNA + NADH + H(+). Its function is as follows. Catalyzes the synthesis of 5,6-dihydrouridine (D), a modified base found in the D-loop of most tRNAs, via the reduction of the C5-C6 double bond in target uridines. Specifically modifies U16 in tRNAs. The protein is tRNA-dihydrouridine(16) synthase of Shewanella oneidensis (strain ATCC 700550 / JCM 31522 / CIP 106686 / LMG 19005 / NCIMB 14063 / MR-1).